The primary structure comprises 500 residues: Probable cardiolipin synthase YwiE (500 aa).

A run of 3 helical transmembrane segments spans residues 6-26 (LEFFFLYMMLIGAYVIWFFPV), 31-51 (FYGGLLCYISIILFSIYSLIL), and 59-79 (TLLWIHILVFFPIVGYVFYLF). PLD phosphodiesterase domains lie at 237 to 264 (LNFRNHRKIVIIDGKTGFVGGLNVGKEY) and 413 to 440 (QKGFMHQKVMIIDGDLASVGTANMDMRS). Catalysis depends on residues histidine 242, lysine 244, aspartate 249, histidine 418, lysine 420, and aspartate 425.

The protein belongs to the phospholipase D family. Cardiolipin synthase subfamily.

It is found in the cell membrane. It carries out the reaction 2 a 1,2-diacyl-sn-glycero-3-phospho-(1'-sn-glycerol) = a cardiolipin + glycerol. Functionally, catalyzes the reversible phosphatidyl group transfer from one phosphatidylglycerol molecule to another to form cardiolipin (CL) (diphosphatidylglycerol) and glycerol. May have a role in the heat shock response since the level of the transcript of ywiE increases after a heat shock. This is Probable cardiolipin synthase YwiE (ywiE) from Bacillus subtilis (strain 168).